The sequence spans 431 residues: Enolase (431 aa).

Gln167 serves as a coordination point for (2R)-2-phosphoglycerate. Glu209 serves as the catalytic Proton donor. The Mg(2+) site is built by Asp246, Glu289, and Asp316. Residues Lys341, Arg370, Ser371, and Lys392 each contribute to the (2R)-2-phosphoglycerate site. Lys341 (proton acceptor) is an active-site residue.

Belongs to the enolase family. As to quaternary structure, component of the RNA degradosome, a multiprotein complex involved in RNA processing and mRNA degradation. Requires Mg(2+) as cofactor.

It localises to the cytoplasm. The protein localises to the secreted. The protein resides in the cell surface. It catalyses the reaction (2R)-2-phosphoglycerate = phosphoenolpyruvate + H2O. Its pathway is carbohydrate degradation; glycolysis; pyruvate from D-glyceraldehyde 3-phosphate: step 4/5. Catalyzes the reversible conversion of 2-phosphoglycerate (2-PG) into phosphoenolpyruvate (PEP). It is essential for the degradation of carbohydrates via glycolysis. The polypeptide is Enolase (Marinobacter nauticus (strain ATCC 700491 / DSM 11845 / VT8) (Marinobacter aquaeolei)).